The following is a 268-amino-acid chain: Phosphatidylglycerol--prolipoprotein diacylglyceryl transferase (268 aa).

Transmembrane regions (helical) follow at residues 25 to 45, 57 to 77, and 93 to 113; these read WYGVFFALSFLCGLYLMTKVF, YLFYYMIAGTVIGARLGHCFF, and VWHGGLASHGGVLGILTAVYF. A 1,2-diacyl-sn-glycero-3-phospho-(1'-sn-glycerol) is bound at residue Arg-142. 4 helical membrane passes run 151–171, 175–195, 204–224, and 236–256; these read IIGIPTDVSWAFIFARVDLLP, VQLYESIVYFLIFGFLMLAYW, GLLLGTILTSVFSARFLLEFF, and PLSVGQWLSIPAVIIGVLLIF.

Belongs to the Lgt family.

The protein resides in the cell inner membrane. The enzyme catalyses L-cysteinyl-[prolipoprotein] + a 1,2-diacyl-sn-glycero-3-phospho-(1'-sn-glycerol) = an S-1,2-diacyl-sn-glyceryl-L-cysteinyl-[prolipoprotein] + sn-glycerol 1-phosphate + H(+). The protein operates within protein modification; lipoprotein biosynthesis (diacylglyceryl transfer). Its function is as follows. Catalyzes the transfer of the diacylglyceryl group from phosphatidylglycerol to the sulfhydryl group of the N-terminal cysteine of a prolipoprotein, the first step in the formation of mature lipoproteins. In Chloroherpeton thalassium (strain ATCC 35110 / GB-78), this protein is Phosphatidylglycerol--prolipoprotein diacylglyceryl transferase.